The following is a 651-amino-acid chain: LysM domain receptor-like kinase 3 (651 aa).

An N-terminal signal peptide occupies residues 1-19 (MNLTFYIFFLSLLPSFSSS). 8 N-linked (GlcNAc...) asparagine glycosylation sites follow: asparagine 2, asparagine 23, asparagine 42, asparagine 73, asparagine 86, asparagine 100, asparagine 114, and asparagine 177. Residues 20–236 (KPMNCSDTTR…TAKSGSHVPY (217 aa)) are Extracellular-facing. Disulfide bonds link cysteine 24–cysteine 76, cysteine 31–cysteine 133, and cysteine 74–cysteine 131. The LysM domain occupies 142–186 (MSYVAMAGDSVQSLSSRFGVSMDRIEDVNGILNLDNITAGDLLYI). Residues 196–216 (YETSKINPPAPSPAPASSLAN) are disordered. N-linked (GlcNAc...) asparagine glycans are attached at residues asparagine 218 and asparagine 225. The chain crosses the membrane as a helical span at residues 237-257 (IWIVGGLGVVLALLVLCILVC). Residues 258–651 (ICLRSSSCSS…QVFSGLVQGR (394 aa)) are Cytoplasmic-facing. A Phosphothreonine modification is found at threonine 330. One can recognise a Protein kinase domain in the interval 341-628 (FSDSNLLGHG…VVISLSQILL (288 aa)). Residues 347–355 (LGHGNYGSV) and lysine 368 contribute to the ATP site. The residue at position 410 (tyrosine 410) is a Phosphotyrosine. Aspartate 464 serves as the catalytic Proton acceptor. Position 468 is a phosphoserine (serine 468). Threonine 500 and threonine 505 each carry phosphothreonine. Tyrosine 513 carries the phosphotyrosine modification.

This sequence belongs to the protein kinase superfamily. Ser/Thr protein kinase family.

Its subcellular location is the cell membrane. Its function is as follows. Putative Lysin motif (LysM) receptor kinase that may recognize microbe-derived N-acetylglucosamine (NAG)-containing ligands. The sequence is that of LysM domain receptor-like kinase 3 (LYK3) from Arabidopsis thaliana (Mouse-ear cress).